Reading from the N-terminus, the 87-residue chain is U3-theraphotoxin-Hhn1a 10 (87 aa).

An N-terminal signal peptide occupies residues 1–24; that stretch reads MVNMEASMFLTFAGLVLLFVVCYA. Positions 25 to 52 are excised as a propeptide; it reads SESEEKEFPKEMLSSIFAVDNDFKQEER. 3 cysteine pairs are disulfide-bonded: Cys54-Cys67, Cys61-Cys72, and Cys66-Cys79.

This sequence belongs to the neurotoxin 10 (Hwtx-1) family. 51 (Hntx-8) subfamily. Hntx-8 sub-subfamily. In terms of tissue distribution, expressed by the venom gland.

Its subcellular location is the secreted. Functionally, ion channel inhibitor. The polypeptide is U3-theraphotoxin-Hhn1a 10 (Cyriopagopus hainanus (Chinese bird spider)).